A 308-amino-acid polypeptide reads, in one-letter code: Ribosome maturation factor RimP (308 aa).

Disordered regions lie at residues 1 to 31 (MARAGESGRAGVRRSTAPSRRTGGARAAADA), 94 to 113 (EDIGTDGAGGTGGSGGAAGG), and 249 to 308 (DLDE…EMNR). Low complexity predominate over residues 17 to 31 (APSRRTGGARAAADA). A compositionally biased stretch (gly residues) spans 99 to 113 (DGAGGTGGSGGAAGG). The span at 249–269 (DLDEGLEDDDGLEDEDDEDEY) shows a compositional bias: acidic residues.

The protein belongs to the RimP family.

The protein resides in the cytoplasm. Its function is as follows. Required for maturation of 30S ribosomal subunits. This chain is Ribosome maturation factor RimP, found in Parafrankia sp. (strain EAN1pec).